The sequence spans 436 residues: MPKPVIAIVGRPNVGKSTIFNRIVGERVSIVEDIPGITRDRIYSAGEWLNHEFNIIDTGGIDIGDEPFLTQIRQQAEVAIDEADVIIFMTNGRDGVTAADEEVAKILYRSKKPIVLAVNKVDNPEMRSDIYDFYSLGFGEPFPISGTHGLGLGDLLDEAANHFPKIEEEAYDDETIRFSLIGRPNVGKSSLVNALLGQERVIVSNIAGTTRDAVDTPYSKDDQDYVIIDTAGMRKKGKVYESTEKYSVLRALRAIERSDVVLVVLDGEEGIIEQDKKIAGYAHDSGRAVIIVVNKWDAVKKDEKTMKAFEENIRAHFQFLDYAPIVFLSAKTKKRTQTLLPVINEVNESHSIRVQTNVLNDVIMDAVAMNPTPTHNGSRLKIFYATQVAVKPPTFVVFVNDTELMHFSYERFLKNRLREAFGFVGTPIHIIARARD.

EngA-type G domains lie at 4 to 167 (PVIA…PKIE) and 176 to 351 (IRFS…ESHS). GTP-binding positions include 10 to 17 (GRPNVGKS), 57 to 61 (DTGGI), 119 to 122 (NKVD), 182 to 189 (GRPNVGKS), 229 to 233 (DTAGM), and 294 to 297 (NKWD). The region spanning 352-436 (IRVQTNVLND…PIHIIARARD (85 aa)) is the KH-like domain.

The protein belongs to the TRAFAC class TrmE-Era-EngA-EngB-Septin-like GTPase superfamily. EngA (Der) GTPase family. In terms of assembly, associates with the 50S ribosomal subunit.

Functionally, GTPase that plays an essential role in the late steps of ribosome biogenesis. The polypeptide is GTPase Der (Bacillus cereus (strain G9842)).